A 277-amino-acid chain; its full sequence is Ribosomal protein L11 methyltransferase (277 aa).

S-adenosyl-L-methionine-binding residues include Thr-130, Gly-151, Asp-172, and Asn-213.

The protein belongs to the methyltransferase superfamily. PrmA family.

It localises to the cytoplasm. The catalysed reaction is L-lysyl-[protein] + 3 S-adenosyl-L-methionine = N(6),N(6),N(6)-trimethyl-L-lysyl-[protein] + 3 S-adenosyl-L-homocysteine + 3 H(+). In terms of biological role, methylates ribosomal protein L11. This chain is Ribosomal protein L11 methyltransferase, found in Campylobacter concisus (strain 13826).